The primary structure comprises 304 residues: Sulfotransferase 1C3 (304 aa).

Lysine 56–tryptophan 61 is a binding site for 3'-phosphoadenylyl sulfate. Lysine 115–histidine 117 contributes to the substrate binding site. Histidine 117 (proton acceptor) is an active-site residue. 3'-phosphoadenylyl sulfate is bound by residues arginine 139, serine 147, tyrosine 202, threonine 236–methionine 241, and phenylalanine 264–glycine 268.

Belongs to the sulfotransferase 1 family. Not detectable in any of the tissues tested. As to expression, expressed in the small intestine.

Its subcellular location is the cytoplasm. It carries out the reaction an alcohol + 3'-phosphoadenylyl sulfate = an alkyl sulfate + adenosine 3',5'-bisphosphate + H(+). The enzyme catalyses a phenol + 3'-phosphoadenylyl sulfate = an aryl sulfate + adenosine 3',5'-bisphosphate + H(+). The catalysed reaction is lithocholate + 3'-phosphoadenylyl sulfate = lithocholate sulfate + adenosine 3',5'-bisphosphate + H(+). Sulfotransferase that utilizes 3'-phospho-5'-adenylyl sulfate (PAPS) as sulfonate donor. Has sulfotransferase activity towards various substrates, such as bile acids, thyroid hormones and toward xenobiotic compounds such as chloro phenols and hydroxypyrenes. Lithocholic acid appears to be the best substrate among the endogenous compounds tested and 3,3',5,5'-tetrachloro-4,4'-biphenyldiol shows the highest specific activity among the xenobiotic compounds. Its function is as follows. Exhibits weak sulphating activity and only toward chloro phenols (pentachlorophenol and 3,3',5,5'-tetrachloro-4,4'-biphenyldiol). In Homo sapiens (Human), this protein is Sulfotransferase 1C3 (SULT1C3).